The chain runs to 502 residues: ATP synthase subunit alpha (502 aa).

An ATP-binding site is contributed by 169–176 (GDRQTGKT).

This sequence belongs to the ATPase alpha/beta chains family. In terms of assembly, F-type ATPases have 2 components, CF(1) - the catalytic core - and CF(0) - the membrane proton channel. CF(1) has five subunits: alpha(3), beta(3), gamma(1), delta(1), epsilon(1). CF(0) has three main subunits: a(1), b(2) and c(9-12). The alpha and beta chains form an alternating ring which encloses part of the gamma chain. CF(1) is attached to CF(0) by a central stalk formed by the gamma and epsilon chains, while a peripheral stalk is formed by the delta and b chains.

Its subcellular location is the cell membrane. It carries out the reaction ATP + H2O + 4 H(+)(in) = ADP + phosphate + 5 H(+)(out). Functionally, produces ATP from ADP in the presence of a proton gradient across the membrane. The alpha chain is a regulatory subunit. The protein is ATP synthase subunit alpha of Bacillus velezensis (strain DSM 23117 / BGSC 10A6 / LMG 26770 / FZB42) (Bacillus amyloliquefaciens subsp. plantarum).